The following is a 163-amino-acid chain: Campylobacter invasion antigen D (163 aa).

Positions 135 to 145 match the MKD motif; the sequence is KKDDLENRLNL.

In terms of assembly, interacts with the host cell protein IQGAP1, thus displacing RACGAP1 from the IQGAP1 complex.

It is found in the secreted. The protein localises to the host cytoplasm. It localises to the host cytosol. Effector protein required for the development of acute disease and colon inflammatory lesions. Required for maximal host cell invasion and maximal secretion of the inflammatory chemokine interleukin-8 (IL-8) from host cells. Acts by activating the host MAP kinase signaling pathways ERK-1/2 and p38 to promote both cellular invasion and the release of IL-8. CiaD mediated activation of ERK-1/2 leads to the phosphorylation of host cortactin (CTTN) on serine residues and association of cortactin with N-WASP, promoting actin cytoskeleton rearrangement, membrane ruffling and host cell invasion. In addition, maximal host cell invasion requires interaction with the host cell protein IQGAP1, a Ras GTPase-activating-like protein. Binding to IQGAP1 facilitates the activation of the Rho GTPases RAC1 and CDC42, further promoting actin reorganization and bacterial uptake. CiaD promotes RAC1 activation by excluding RACGAP1 from the IQGAP1 complex, preventing the deactivation of RAC1. CiaD probably activates ERK signaling upstream or independently of IQGAP1. This chain is Campylobacter invasion antigen D, found in Campylobacter jejuni subsp. jejuni serotype O:2 (strain ATCC 700819 / NCTC 11168).